The sequence spans 1280 residues: Ankyrin repeat and sterile alpha motif domain-containing protein 1B (1280 aa).

ANK repeat units lie at residues 2–31 (GKEQ…GLLG), 57–86 (SGYT…STNV), 90–119 (KGCF…SHSR), 126–155 (EKET…DPSM), 159–188 (RGET…NLMS), 192–221 (RKHT…DVNT), and 224–253 (EKGS…DANI). Disordered stretches follow at residues 299-322 (RHRP…LRHK), 361-399 (MESF…EEKS), 479-573 (SVSD…STGS), 704-723 (NGEA…SNTG), and 755-791 (SNLV…PSFT). Residues 482-491 (DAERGNHGDD) show a composition bias toward basic and acidic residues. Composition is skewed to polar residues over residues 520-550 (KQRT…SSLG), 707-723 (ARSN…SNTG), and 770-782 (SRGQ…SSPS). SAM domains lie at 824–890 (CPVQ…LPRV) and 898–963 (NNPT…RLHE). 2 disordered regions span residues 960 to 994 (RLHE…LSQA) and 1208 to 1243 (GSST…MDQK). The segment covering 980–994 (GNHTPPQLSPSLSQA) has biased composition (polar residues). The PID domain occupies 1071 to 1223 (IFQSCDYEAY…ESFDSKPSKP (153 aa)).

The protein localises to the cytoplasm. This Danio rerio (Zebrafish) protein is Ankyrin repeat and sterile alpha motif domain-containing protein 1B (anks1b).